The sequence spans 192 residues: Large ribosomal subunit protein uL10 (192 aa).

This sequence belongs to the universal ribosomal protein uL10 family. In terms of assembly, part of the ribosomal stalk of the 50S ribosomal subunit. The N-terminus interacts with L11 and the large rRNA to form the base of the stalk. The C-terminus forms an elongated spine to which L12 dimers bind in a sequential fashion forming a multimeric L10(L12)X complex.

Forms part of the ribosomal stalk, playing a central role in the interaction of the ribosome with GTP-bound translation factors. The sequence is that of Large ribosomal subunit protein uL10 from Gloeobacter violaceus (strain ATCC 29082 / PCC 7421).